The sequence spans 1818 residues: Protein encore (1818 aa).

Disordered stretches follow at residues 47–68, 123–282, and 317–413; these read ANSSGVGSGSGPGPGSGAGVSG, SAAG…NSSN, and AERH…GFIS. The span at 52 to 66 shows a compositional bias: gly residues; that stretch reads VGSGSGPGPGSGAGV. A compositionally biased stretch (polar residues) spans 124 to 137; sequence AAGSSNLGRQNSFG. Positions 141–152 are enriched in basic residues; the sequence is GNMKGKHLTRSH. 4 stretches are compositionally biased toward low complexity: residues 156–179, 186–199, 217–233, and 266–282; these read ESTSPPRTPTPRAASEQQQQQLQG, NNNNINSSSKAQSA, QQPQQQQQQQQQQQQSV, and NSNGSGMEFNNNNNSSN. Residues S267 and S270 each carry the phosphoserine modification. Residues 317 to 328 are compositionally biased toward basic and acidic residues; sequence AERHDRHERHEM. S336 carries the post-translational modification Phosphoserine. Residues 338 to 348 show a composition bias toward basic and acidic residues; it reads NHDEEPYHYEP. 2 stretches are compositionally biased toward low complexity: residues 372-381 and 391-410; these read NLGGSSSGSI and NCNNMSNNGQSNNSSNNTSG. The region spanning 444 to 508 is the R3H domain; sequence RNILLKIEKD…QCVIVAVAKN (65 aa). The SUZ domain maps to 510-576; sequence RIPEIRFQSL…ARSRIFSRTG (67 aa). At S535 the chain carries Phosphoserine. The segment covering 557 to 568 has biased composition (basic and acidic residues); it reads FEEREEDYDRAR. Disordered stretches follow at residues 557–806, 885–916, 936–959, 1176–1249, 1332–1648, and 1684–1709; these read FEER…SYEQ, QEQEQEPMAGPSSSGSATSSVGITELPSSQTP, PYSQCEVKTPSQNHAPSAAVEEPK, GQAP…YNPS, AAAG…LVSH, and GAGASGAAGSNGGHQPGGGGGARSHI. The span at 592-606 shows a compositional bias: low complexity; that stretch reads YGGWEQQQQQQKQSQ. Residues 644-655 show a composition bias toward gly residues; sequence NYGGPPSSGGPG. Polar residues predominate over residues 678–695; sequence QDSTGSTPWRLSPSSSGS. Over residues 713-771 the composition is skewed to low complexity; the sequence is SGNQYQSQNQGNSSSGGYNNYRKSSPHQQQQSQQQQQSQQHHQQQLQQPQQLHQQSSQQ. A compositionally biased stretch (polar residues) spans 772-784; it reads YATTELSCSSTES. Residues 893–904 are compositionally biased toward low complexity; that stretch reads AGPSSSGSATSS. The span at 1176–1197 shows a compositional bias: low complexity; that stretch reads GQAPMQQQAPHTGAGTTTGPPT. A compositionally biased stretch (polar residues) spans 1220–1231; the sequence is SSNGSVVTSSAY. Low complexity predominate over residues 1381-1392; the sequence is ASQSAPSTPAAP. Residues 1430 to 1443 are compositionally biased toward polar residues; the sequence is TPHYYQGQNSNEGY. Low complexity predominate over residues 1503-1521; sequence ASPSSVSLGGASSSGGANS. Composition is skewed to polar residues over residues 1554–1565 and 1579–1596; these read AANSSPGVSSYE and FRSQKSMNQDYRRSVSQR. Over residues 1608–1633 the composition is skewed to low complexity; sequence SHESSNNSPNSIVGSQSNSAANTPNA. Residues 1684-1705 show a composition bias toward gly residues; it reads GAGASGAAGSNGGHQPGGGGGA.

In terms of assembly, interacts with hfp; however, given the nuclear localization of hfp, the relevance of such interaction is unclear. Interacts with CycE, Cul1, and the SCF-proteasome complex. As to expression, expressed in all germline cells of the germarium including the stem cells and dividing cystocytes.

The protein resides in the cytoplasm. Functionally, required for the regulation of germline mitosis, karyosome formation, and establishment of dorsoventral (DS) polarity of the egg and embryo. Involved in proper grk mRNA localization and translation in the oocyte. May control germline mitosis by facilitating the cyclin E (CycE) proteolysis by the SCF-ubiquitin-proteasome complex. The sequence is that of Protein encore (enc) from Drosophila melanogaster (Fruit fly).